The primary structure comprises 1194 residues: IQ motif and SEC7 domain-containing protein 3 (1194 aa).

Positions 20–56 form a coiled coil; that stretch reads AIVQNQQSLIHTQRQRIDELERRLDELSAENRSLWEH. Disordered stretches follow at residues 62–149 and 229–272; these read AQPP…EKER and GRPS…QQPA. The span at 63 to 78 shows a compositional bias: pro residues; sequence QPPPGLVPPPSAPLPA. The span at 79 to 92 shows a compositional bias: low complexity; sequence PAATAPAATAAQEP. The segment covering 122–133 has biased composition (polar residues); that stretch reads PSSRVQTPQSPH. Position 255 is a phosphoserine (Ser255). The IQ domain maps to 311–340; the sequence is SRRAACTIQTAFRQYQLSKNFEKIRNSLLE. Disordered stretches follow at residues 439-471 and 515-610; these read SAGQPGLETEAAREPDSGPGSGDEAGSLPQGHS and PAAV…KSAK. Composition is skewed to low complexity over residues 561–572 and 600–610; these read VAEAVVEEAVAT and SSSSASTKSAK. The 194-residue stretch at 646 to 839 folds into the SEC7 domain; it reads TLSTDTLRKR…VGIYERIQQK (194 aa). Residues 852-985 form the PH domain; it reads TKVEKSIVGM…LKESIAEVTE (134 aa). 2 disordered regions span residues 1002–1099 and 1137–1175; these read KTLS…PTPP and SSDSCGSTPLRGPGSPVKVIHQPPLPPPPPPYNHPHQFC. Positions 1024 to 1035 are enriched in basic and acidic residues; sequence AKREAMAGEKAT. Polar residues predominate over residues 1036–1052; that stretch reads ESSGEVSIHNRLQTFQH. Pro residues-rich tracts occupy residues 1064–1099 and 1159–1169; these read APSPPTSPPPPLPPDPQPSPLREQPPPLPLPPPTPP and PPLPPPPPPYN.

Belongs to the BRAG family. As to quaternary structure, interacts with DLG1 and DLG4. Interacts with GPHN. Expressed in brain. Localized to dendrites, as well as somas of neuronal cells.

The protein resides in the cytoplasm. The protein localises to the postsynaptic density. Its function is as follows. Acts as a guanine nucleotide exchange factor (GEF) for ARF1. The chain is IQ motif and SEC7 domain-containing protein 3 (Iqsec3) from Rattus norvegicus (Rat).